We begin with the raw amino-acid sequence, 254 residues long: UPF0246 protein Fphi_1075 (254 aa).

The protein belongs to the UPF0246 family.

This chain is UPF0246 protein Fphi_1075, found in Francisella philomiragia subsp. philomiragia (strain ATCC 25017 / CCUG 19701 / FSC 153 / O#319-036).